The primary structure comprises 104 residues: Small ribosomal subunit protein bS16 (104 aa).

This sequence belongs to the bacterial ribosomal protein bS16 family.

The sequence is that of Small ribosomal subunit protein bS16 from Wolbachia pipientis subsp. Culex pipiens (strain wPip).